The following is a 362-amino-acid chain: Serine/threonine-protein kinase SBK2 (362 aa).

Positions 1 to 11 (MPGKQSEDRPM) are enriched in basic and acidic residues. A disordered region spans residues 1–20 (MPGKQSEDRPMEVAAVEDGG). One can recognise a Protein kinase domain in the interval 62 to 330 (YEEVRPLGQG…IKSYLGQPWK (269 aa)). ATP-binding positions include 68–76 (LGQGRFGRV) and Lys91. The Proton acceptor role is filled by Asp183. The disordered stretch occupies residues 317–362 (PVSSIKSYLGQPWKQREEGAEELTKELREDGSRGGQEAAKGEQPAC). The span at 330–348 (KQREEGAEELTKELREDGS) shows a compositional bias: basic and acidic residues.

This sequence belongs to the protein kinase superfamily. Ser/Thr protein kinase family. STKL subfamily.

The catalysed reaction is L-seryl-[protein] + ATP = O-phospho-L-seryl-[protein] + ADP + H(+). The enzyme catalyses L-threonyl-[protein] + ATP = O-phospho-L-threonyl-[protein] + ADP + H(+). This chain is Serine/threonine-protein kinase SBK2 (Sbk2), found in Rattus norvegicus (Rat).